Reading from the N-terminus, the 345-residue chain is S-adenosylmethionine:tRNA ribosyltransferase-isomerase (345 aa).

The protein belongs to the QueA family. Monomer.

The protein resides in the cytoplasm. The enzyme catalyses 7-aminomethyl-7-carbaguanosine(34) in tRNA + S-adenosyl-L-methionine = epoxyqueuosine(34) in tRNA + adenine + L-methionine + 2 H(+). It functions in the pathway tRNA modification; tRNA-queuosine biosynthesis. Transfers and isomerizes the ribose moiety from AdoMet to the 7-aminomethyl group of 7-deazaguanine (preQ1-tRNA) to give epoxyqueuosine (oQ-tRNA). The protein is S-adenosylmethionine:tRNA ribosyltransferase-isomerase of Helicobacter pylori (strain P12).